Reading from the N-terminus, the 1171-residue chain is APC-related protein 1 (1171 aa).

The segment at 1–54 is disordered; the sequence is MSSSSSDENETTIHSSSNPGSSGIYSQLKAGSSKRPSVRHDVSDAEDDEEPYEG. Residues 1 to 481 form a required for interaction with bar-1 and hmp-2 region; the sequence is MSSSSSDENE…LSLRATRASP (481 aa). Residues 15–26 show a composition bias toward low complexity; it reads SSSNPGSSGIYS. The stretch at 312 to 356 is one ARM repeat; that stretch reads NCLKVLANILSPDARFTTLVDSASGILKYVSQYLATNSSHLELRS. Disordered regions lie at residues 587 to 617, 662 to 699, 720 to 741, 767 to 822, 837 to 936, and 995 to 1030; these read PVDD…NPGS, HPED…GTTV, RKTS…LEVE, EEMP…EMTT, PRSR…TMRI, and SSGS…SSLP. The tract at residues 591–1171 is required for interaction with pry-1; that stretch reads DLDIPTSTVM…NPKQMLVTIV (581 aa). Polar residues-rich tracts occupy residues 595-617 and 666-697; these read PTST…NPGS and NQMT…SDGT. The span at 788–799 shows a compositional bias: polar residues; sequence FSPSQKTTSSPA. Residues 857-874 are compositionally biased toward basic and acidic residues; that stretch reads EPDRSSHSKNEEADRRDA. Polar residues-rich tracts occupy residues 890–913 and 1002–1028; these read RGSS…SSED and LQKA…SVSS.

Belongs to the adenomatous polyposis coli (APC) family. Interacts (via N-terminus) with bar-1 and hmp-2; the interaction with hmp-2 is relatively weak. Interacts (via C-terminus) with pry-1 (via N-terminus). Probably associates with bar-1, gsk-3, pry-1 in a complex.

The protein resides in the cell junction. It is found in the adherens junction. It localises to the cytoplasm. Its subcellular location is the nucleus. In terms of biological role, has a role in endoderm cell specification and pharyngeal development. Required for the migration of epithelial cells, organization of the anterior seam cells and ceh-13 expression during embryo morphogenesis. Prevents hyperactivation of the Wnt signaling pathway during endoderm development, probably by preventing hmp-2 nuclear translocation. During larval development, apr-1 is required for expression of lin-39 in P3-8.p. Shown to negatively regulate Wnt signaling in vulval precursor cells. Has a role in cell division by establishing the polarity of the mother cell which forms the asymmetries of the daughter nuclei. Thought to regulate export of wrm-1 from the nucleus possibly as part of a complex involving pry-1. This chain is APC-related protein 1, found in Caenorhabditis briggsae.